The following is a 366-amino-acid chain: S-adenosylmethionine decarboxylase proenzyme 1 (366 aa).

Catalysis depends on residues glutamate 9 and glutamate 12. Position 68 (glutamate 68) interacts with substrate. Serine 69 functions as the Schiff-base intermediate with substrate; via pyruvic acid in the catalytic mechanism. Serine 69 carries the pyruvic acid (Ser); by autocatalysis modification. Cysteine 83 functions as the Proton donor; for catalytic activity in the catalytic mechanism. Active-site proton acceptor; for processing activity residues include serine 233 and histidine 246. Glutamate 250 serves as a coordination point for substrate.

Belongs to the eukaryotic AdoMetDC family. Pyruvate is required as a cofactor. In terms of processing, is synthesized initially as an inactive proenzyme. Formation of the active enzyme involves a self-maturation process in which the active site pyruvoyl group is generated from an internal serine residue via an autocatalytic post-translational modification. Two non-identical subunits are generated from the proenzyme in this reaction, and the pyruvate is formed at the N-terminus of the alpha chain, which is derived from the carboxyl end of the proenzyme. The post-translation cleavage follows an unusual pathway, termed non-hydrolytic serinolysis, in which the side chain hydroxyl group of the serine supplies its oxygen atom to form the C-terminus of the beta chain, while the remainder of the serine residue undergoes an oxidative deamination to produce ammonia and the pyruvoyl group blocking the N-terminus of the alpha chain.

The catalysed reaction is S-adenosyl-L-methionine + H(+) = S-adenosyl 3-(methylsulfanyl)propylamine + CO2. It participates in amine and polyamine biosynthesis; S-adenosylmethioninamine biosynthesis; S-adenosylmethioninamine from S-adenosyl-L-methionine: step 1/1. In terms of biological role, essential for biosynthesis of the polyamines spermidine and spermine. Essential for polyamine homeostasis, and normal plant embryogenesis, growth and development. The sequence is that of S-adenosylmethionine decarboxylase proenzyme 1 from Arabidopsis thaliana (Mouse-ear cress).